An 87-amino-acid polypeptide reads, in one-letter code: Small ribosomal subunit protein bS20 (87 aa).

Positions 1-27 are disordered; the sequence is MANIKSAKKRAVQSEKRRKHNASRRSM.

Belongs to the bacterial ribosomal protein bS20 family.

Functionally, binds directly to 16S ribosomal RNA. The protein is Small ribosomal subunit protein bS20 of Pectobacterium carotovorum subsp. carotovorum (strain PC1).